Here is a 794-residue protein sequence, read N- to C-terminus: Phosphoribosylformylglycinamidine synthase subunit PurL (794 aa).

The active site involves H47. ATP contacts are provided by Y50 and K89. E91 contributes to the Mg(2+) binding site. Substrate is bound by residues 92–95 (SHNH) and R114. H93 functions as the Proton acceptor in the catalytic mechanism. D115 lines the Mg(2+) pocket. Residue Q238 coordinates substrate. D266 serves as a coordination point for Mg(2+). 310-312 (ESQ) provides a ligand contact to substrate. Positions 522 and 559 each coordinate ATP. N560 provides a ligand contact to Mg(2+). S562 serves as a coordination point for substrate.

Belongs to the FGAMS family. As to quaternary structure, monomer. Part of the FGAM synthase complex composed of 1 PurL, 1 PurQ and 2 PurS subunits.

The protein localises to the cytoplasm. The enzyme catalyses N(2)-formyl-N(1)-(5-phospho-beta-D-ribosyl)glycinamide + L-glutamine + ATP + H2O = 2-formamido-N(1)-(5-O-phospho-beta-D-ribosyl)acetamidine + L-glutamate + ADP + phosphate + H(+). Its pathway is purine metabolism; IMP biosynthesis via de novo pathway; 5-amino-1-(5-phospho-D-ribosyl)imidazole from N(2)-formyl-N(1)-(5-phospho-D-ribosyl)glycinamide: step 1/2. Its function is as follows. Part of the phosphoribosylformylglycinamidine synthase complex involved in the purines biosynthetic pathway. Catalyzes the ATP-dependent conversion of formylglycinamide ribonucleotide (FGAR) and glutamine to yield formylglycinamidine ribonucleotide (FGAM) and glutamate. The FGAM synthase complex is composed of three subunits. PurQ produces an ammonia molecule by converting glutamine to glutamate. PurL transfers the ammonia molecule to FGAR to form FGAM in an ATP-dependent manner. PurS interacts with PurQ and PurL and is thought to assist in the transfer of the ammonia molecule from PurQ to PurL. The sequence is that of Phosphoribosylformylglycinamidine synthase subunit PurL from Prochlorococcus marinus (strain MIT 9313).